The primary structure comprises 336 residues: Dihydroorotate dehydrogenase (quinone) (336 aa).

Residues 62 to 66 and threonine 86 contribute to the FMN site; that span reads AGLDK. Lysine 66 is a substrate binding site. Residue 111–115 coordinates substrate; that stretch reads NRMGF. 2 residues coordinate FMN: asparagine 139 and asparagine 172. A substrate-binding site is contributed by asparagine 172. The active-site Nucleophile is serine 175. Asparagine 177 provides a ligand contact to substrate. Positions 217 and 245 each coordinate FMN. 246 to 247 contacts substrate; that stretch reads NT. FMN-binding positions include glycine 268, glycine 297, and 318-319; that span reads YS.

The protein belongs to the dihydroorotate dehydrogenase family. Type 2 subfamily. Monomer. The cofactor is FMN.

It localises to the cell membrane. The enzyme catalyses (S)-dihydroorotate + a quinone = orotate + a quinol. It participates in pyrimidine metabolism; UMP biosynthesis via de novo pathway; orotate from (S)-dihydroorotate (quinone route): step 1/1. Its function is as follows. Catalyzes the conversion of dihydroorotate to orotate with quinone as electron acceptor. The protein is Dihydroorotate dehydrogenase (quinone) of Cronobacter sakazakii (strain ATCC BAA-894) (Enterobacter sakazakii).